A 493-amino-acid polypeptide reads, in one-letter code: Polyamine aminopropyltransferase 2 (493 aa).

7 helical membrane-spanning segments follow: residues 9–29 (LCIF…ATLA), 32–52 (LLGN…LSMG), 68–88 (LAFV…VPIA), 101–121 (VIYG…PLAV), 137–157 (VLEK…YLFL), 161–181 (GLPL…FLLV), and 188–208 (KFLK…AVGH). Residues 187-448 (KKFLKFLAIF…PLNFENFELK (262 aa)) form a spermidine synthase region. The region spanning 202 to 437 (ATYAVGHKRI…GEWGMVIGSK (236 aa)) is the PABS domain. S-methyl-5'-thioadenosine is bound at residue Gln233. Spermidine is bound by residues His263 and Asp287. S-methyl-5'-thioadenosine-binding positions include Asp306 and 340-341 (DA). Asp358 acts as the Proton acceptor in catalysis.

This sequence belongs to the spermidine/spermine synthase family. In terms of assembly, homodimer or homotetramer.

The protein resides in the cell membrane. The catalysed reaction is S-adenosyl 3-(methylsulfanyl)propylamine + putrescine = S-methyl-5'-thioadenosine + spermidine + H(+). The protein operates within amine and polyamine biosynthesis; spermidine biosynthesis; spermidine from putrescine: step 1/1. In terms of biological role, catalyzes the irreversible transfer of a propylamine group from the amino donor S-adenosylmethioninamine (decarboxy-AdoMet) to putrescine (1,4-diaminobutane) to yield spermidine. The chain is Polyamine aminopropyltransferase 2 from Aquifex aeolicus (strain VF5).